Here is a 268-residue protein sequence, read N- to C-terminus: Tryptophan synthase alpha chain (268 aa).

Catalysis depends on proton acceptor residues E49 and D60.

Belongs to the TrpA family. Tetramer of two alpha and two beta chains.

It catalyses the reaction (1S,2R)-1-C-(indol-3-yl)glycerol 3-phosphate + L-serine = D-glyceraldehyde 3-phosphate + L-tryptophan + H2O. Its pathway is amino-acid biosynthesis; L-tryptophan biosynthesis; L-tryptophan from chorismate: step 5/5. The alpha subunit is responsible for the aldol cleavage of indoleglycerol phosphate to indole and glyceraldehyde 3-phosphate. The protein is Tryptophan synthase alpha chain of Escherichia coli (strain ATCC 8739 / DSM 1576 / NBRC 3972 / NCIMB 8545 / WDCM 00012 / Crooks).